The primary structure comprises 200 residues: LHFPL tetraspan subfamily member 7 protein (200 aa).

4 consecutive transmembrane segments (helical) span residues 5–27 (VWVA…PAWF), 68–88 (VSAV…IFLL), 113–133 (AATA…SPFI), and 150–170 (LGWG…LPII).

It belongs to the TMEM211 family.

The protein localises to the membrane. In Homo sapiens (Human), this protein is LHFPL tetraspan subfamily member 7 protein.